We begin with the raw amino-acid sequence, 271 residues long: Metal-staphylopine import system ATP-binding protein CntD (271 aa).

The 246-residue stretch at V6–L251 folds into the ABC transporter domain. An ATP-binding site is contributed by G38–S45.

The protein belongs to the ABC transporter superfamily. The complex is composed of two ATP-binding proteins (CntD and CntF), two transmembrane proteins (CntB and CntC) and a solute-binding protein (CntA).

The protein resides in the cell membrane. Functionally, part of the ABC transporter complex CntABCDF (Opp1) involved in the uptake of metal in complex with the metallophore staphylopine (StP). May be involved in the import of a large array of divalent metals ions such as nickel, cobalt, zinc, copper and iron. Probably responsible for energy coupling to the transport system. This Staphylococcus aureus (strain Mu50 / ATCC 700699) protein is Metal-staphylopine import system ATP-binding protein CntD.